The chain runs to 447 residues: MSRKYFGTDGIRGRANGLITPELALKVGQAAGLAFQRGDHRHRVVIGKDTRLSGYMIEYAMVAGFTSVGMDVLLVGPMPTPAVAMLTKSMRADLGVMISASHNLFEDNGIKLFGPQGFKLSDDVEKQIEQLLDEPIDKRLAQSASLGRARRIDGVHDRYIEFAKRTLPRDLSLDGLRVVVDCANGAAYKVVPEALWELGADVVPIGVEPDGFNINKDCGSTSPEALSKKVREMRADIGIALDGDADRVILVDERGHVVDGDQLLAVIAQSWKEDGRLSRPGIVATVMSNLGLERFLKGQGLDLVRTPVGDRYVLEQMLSGGYNLGGEQSGHIILSDYATTGDGFVAALQVLAVVQKSRRPVSEVCHRFDPLPQILKNVRHKGGKPLDDSDVKSAISDGEKRLNGHGRLLIRSSGTEPVIRVMGEGEDRILVEDVVDTIVSALGQAAA.

Residue S101 is the Phosphoserine intermediate of the active site. 4 residues coordinate Mg(2+): S101, D242, D244, and D246. S101 carries the post-translational modification Phosphoserine.

The protein belongs to the phosphohexose mutase family. Requires Mg(2+) as cofactor. Activated by phosphorylation.

The catalysed reaction is alpha-D-glucosamine 1-phosphate = D-glucosamine 6-phosphate. Its function is as follows. Catalyzes the conversion of glucosamine-6-phosphate to glucosamine-1-phosphate. In Bradyrhizobium diazoefficiens (strain JCM 10833 / BCRC 13528 / IAM 13628 / NBRC 14792 / USDA 110), this protein is Phosphoglucosamine mutase.